A 165-amino-acid polypeptide reads, in one-letter code: Phosphopantetheine adenylyltransferase (165 aa).

Ser-9 contributes to the substrate binding site. ATP-binding positions include 9–10 (SF) and His-17. Substrate is bound by residues Lys-41, Ile-75, and Arg-89. Residues 90–92 (GVR), Glu-100, and 125–131 (YLFVRSD) each bind ATP.

The protein belongs to the bacterial CoaD family. In terms of assembly, homohexamer. It depends on Mg(2+) as a cofactor.

The protein resides in the cytoplasm. It catalyses the reaction (R)-4'-phosphopantetheine + ATP + H(+) = 3'-dephospho-CoA + diphosphate. The protein operates within cofactor biosynthesis; coenzyme A biosynthesis; CoA from (R)-pantothenate: step 4/5. In terms of biological role, reversibly transfers an adenylyl group from ATP to 4'-phosphopantetheine, yielding dephospho-CoA (dPCoA) and pyrophosphate. This is Phosphopantetheine adenylyltransferase from Borrelia turicatae (strain 91E135).